Consider the following 322-residue polypeptide: tRNA-dihydrouridine synthase B (322 aa).

Residues 16-18 (PMA) and Gln70 each bind FMN. The active-site Proton donor is Cys100. Residues Lys139, 200–202 (NGD), and 224–225 (GR) each bind FMN.

The protein belongs to the Dus family. DusB subfamily. FMN is required as a cofactor.

It carries out the reaction a 5,6-dihydrouridine in tRNA + NAD(+) = a uridine in tRNA + NADH + H(+). The catalysed reaction is a 5,6-dihydrouridine in tRNA + NADP(+) = a uridine in tRNA + NADPH + H(+). In terms of biological role, catalyzes the synthesis of 5,6-dihydrouridine (D), a modified base found in the D-loop of most tRNAs, via the reduction of the C5-C6 double bond in target uridines. The protein is tRNA-dihydrouridine synthase B of Vibrio parahaemolyticus serotype O3:K6 (strain RIMD 2210633).